The following is a 377-amino-acid chain: 3-dehydroquinate synthase (377 aa).

NAD(+) is bound by residues Gly115 to Asp119, Thr139 to Ser140, Lys152, and Lys161. Residues Glu194, His256, and His275 each coordinate Zn(2+).

This sequence belongs to the sugar phosphate cyclases superfamily. Dehydroquinate synthase family. NAD(+) is required as a cofactor. It depends on Co(2+) as a cofactor. The cofactor is Zn(2+).

The protein resides in the cytoplasm. It carries out the reaction 7-phospho-2-dehydro-3-deoxy-D-arabino-heptonate = 3-dehydroquinate + phosphate. Its pathway is metabolic intermediate biosynthesis; chorismate biosynthesis; chorismate from D-erythrose 4-phosphate and phosphoenolpyruvate: step 2/7. In terms of biological role, catalyzes the conversion of 3-deoxy-D-arabino-heptulosonate 7-phosphate (DAHP) to dehydroquinate (DHQ). In Agrobacterium fabrum (strain C58 / ATCC 33970) (Agrobacterium tumefaciens (strain C58)), this protein is 3-dehydroquinate synthase.